Here is a 436-residue protein sequence, read N- to C-terminus: T-box transcription factor TBX6 (436 aa).

Residues leucine 100–glutamate 273 constitute a DNA-binding region (T-box). Over residues asparagine 274–alanine 284 the composition is skewed to basic and acidic residues. Disordered regions lie at residues asparagine 274–proline 339 and proline 360–serine 379. A compositionally biased stretch (low complexity) spans glutamate 325–proline 339.

As to quaternary structure, forms a dimeric complex with DNA (in vitro).

It localises to the nucleus. T-box transcription factor that plays an essential role in the determination of the fate of axial stem cells: neural vs mesodermal. Acts in part by down-regulating, a specific enhancer (N1) of SOX2, to inhibit neural development. Seems to play also an essential role in left/right axis determination and acts through effects on Notch signaling around the node as well as through an effect on the morphology and motility of the nodal cilia. This chain is T-box transcription factor TBX6 (TBX6), found in Gorilla gorilla gorilla (Western lowland gorilla).